Here is a 30-residue protein sequence, read N- to C-terminus: Trypsin inhibitor 1 (30 aa).

Cystine bridges form between C4/C21, C11/C23, and C17/C29.

It belongs to the protease inhibitor I7 (squash-type serine protease inhibitor) family.

It localises to the secreted. In terms of biological role, inhibits trypsin. The sequence is that of Trypsin inhibitor 1 from Citrullus lanatus (Watermelon).